Reading from the N-terminus, the 457-residue chain is Adenylosuccinate synthetase isozyme 2 (457 aa).

Residues 40 to 46 (GDEGKGK) and 68 to 70 (GHT) each bind GTP. Asp-41 functions as the Proton acceptor in the catalytic mechanism. Positions 41 and 68 each coordinate Mg(2+). Asp-41 is a substrate binding site. IMP contacts are provided by residues 41–44 (DEGK), 66–69 (NAGH), Thr-163, Arg-177, Asn-256, Thr-271, and Arg-335. Catalysis depends on His-69, which acts as the Proton donor. 331-337 (VTTGRKR) provides a ligand contact to substrate. Residues Arg-337, 363–365 (KLD), and 445–448 (GVGK) contribute to the GTP site.

This sequence belongs to the adenylosuccinate synthetase family. In terms of assembly, homodimer. Requires Mg(2+) as cofactor.

It localises to the cytoplasm. It is found in the mitochondrion. The enzyme catalyses IMP + L-aspartate + GTP = N(6)-(1,2-dicarboxyethyl)-AMP + GDP + phosphate + 2 H(+). It participates in purine metabolism; AMP biosynthesis via de novo pathway; AMP from IMP: step 1/2. Inhibited competitively by AMP and IMP and non-competitively by fructose 1,6-bisphosphate. In terms of biological role, plays an important role in the de novo pathway and in the salvage pathway of purine nucleotide biosynthesis. Catalyzes the first committed step in the biosynthesis of AMP from IMP. The sequence is that of Adenylosuccinate synthetase isozyme 2 (adss2) from Xenopus laevis (African clawed frog).